We begin with the raw amino-acid sequence, 384 residues long: 8-amino-7-oxononanoate synthase (384 aa).

R21 is a substrate binding site. 108 to 109 (GF) contacts pyridoxal 5'-phosphate. H133 is a binding site for substrate. S179, H207, and T233 together coordinate pyridoxal 5'-phosphate. The residue at position 236 (K236) is an N6-(pyridoxal phosphate)lysine. T352 contributes to the substrate binding site.

It belongs to the class-II pyridoxal-phosphate-dependent aminotransferase family. BioF subfamily. Homodimer. Requires pyridoxal 5'-phosphate as cofactor.

It carries out the reaction 6-carboxyhexanoyl-[ACP] + L-alanine + H(+) = (8S)-8-amino-7-oxononanoate + holo-[ACP] + CO2. The protein operates within cofactor biosynthesis; biotin biosynthesis. Its function is as follows. Catalyzes the decarboxylative condensation of pimeloyl-[acyl-carrier protein] and L-alanine to produce 8-amino-7-oxononanoate (AON), [acyl-carrier protein], and carbon dioxide. This is 8-amino-7-oxononanoate synthase from Shigella flexneri serotype 5b (strain 8401).